Consider the following 209-residue polypeptide: Thymidine kinase (209 aa).

Residues 9–16 (AAMNAGKS) and 88–91 (DEAQ) each bind ATP. Residue Glu89 is the Proton acceptor of the active site. Residues Cys146, Cys148, Cys183, and His186 each coordinate Zn(2+).

This sequence belongs to the thymidine kinase family. In terms of assembly, homotetramer.

The protein localises to the cytoplasm. The enzyme catalyses thymidine + ATP = dTMP + ADP + H(+). The sequence is that of Thymidine kinase from Legionella pneumophila (strain Paris).